A 143-amino-acid chain; its full sequence is FAD synthase (143 aa).

Residues 13 to 14 (TF), 18 to 21 (HPGH), and D96 contribute to the ATP site.

The protein belongs to the archaeal FAD synthase family. Homodimer. A divalent metal cation is required as a cofactor.

The enzyme catalyses FMN + ATP + H(+) = FAD + diphosphate. The protein operates within cofactor biosynthesis; FAD biosynthesis; FAD from FMN: step 1/1. Functionally, catalyzes the transfer of the AMP portion of ATP to flavin mononucleotide (FMN) to produce flavin adenine dinucleotide (FAD) coenzyme. This chain is FAD synthase, found in Methanothrix thermoacetophila (strain DSM 6194 / JCM 14653 / NBRC 101360 / PT) (Methanosaeta thermophila).